The primary structure comprises 581 residues: MRTTQYLLATIKEIPKSCEPISHQLMLRSGMVRQISSGVYTWLPTGLRVLKKIENIIHEEMNKIGFLEIFMPITQPANLWKQSGRWSEYGLELLRFKNRTNQKFVLGPTHEEMITDLVCNEILSHKQFPIKLYQINTKYRDEARPQFGVIRSKEFIMKDGYSFHIHQKSLEDTYYNIYQQYHIIFKRIGLKFCVVQADPGNIGGIVSHEFQAYYNNTQNETAIFTETFNKDMSNINTRKNNDIVINNIHILNTIQTIKLTSADFHNLIIMRLINYYKSFIQETIKNIIIYIKNKNNIYNLHRIATQAYEKFNDLKLVKIPDIIIPISILNKKNIEIKLNLLKLINTPVPLMINYNVATAMYDFIFHNININKNYCMKINQTPNLSKITTNLYESNIKKINTNQIRKLLPIRNTIEIGHIFQLGKKYSNCINSCIQKKNKDNLNITMGCYGIGITRIVPMVIEQHHDKHGIIWPNEIAPFKLAIIPINMYRFINVQNTAEELYTQLSSIPVIGFDILLDDRKENPGIMFTDIDLLGIPHILIISERNLNNQEVEYKYRKTGIIQKIKLNLIIQFLTEKLMNN.

Belongs to the class-II aminoacyl-tRNA synthetase family. ProS type 1 subfamily. As to quaternary structure, homodimer.

Its subcellular location is the cytoplasm. The enzyme catalyses tRNA(Pro) + L-proline + ATP = L-prolyl-tRNA(Pro) + AMP + diphosphate. Functionally, catalyzes the attachment of proline to tRNA(Pro) in a two-step reaction: proline is first activated by ATP to form Pro-AMP and then transferred to the acceptor end of tRNA(Pro). As ProRS can inadvertently accommodate and process non-cognate amino acids such as alanine and cysteine, to avoid such errors it has two additional distinct editing activities against alanine. One activity is designated as 'pretransfer' editing and involves the tRNA(Pro)-independent hydrolysis of activated Ala-AMP. The other activity is designated 'posttransfer' editing and involves deacylation of mischarged Ala-tRNA(Pro). The misacylated Cys-tRNA(Pro) is not edited by ProRS. This Blochmanniella floridana protein is Proline--tRNA ligase.